A 327-amino-acid polypeptide reads, in one-letter code: Acetyl-coenzyme A carboxylase carboxyl transferase subunit alpha (327 aa).

The CoA carboxyltransferase C-terminal domain maps to 46–299 (LEARAIQLRR…RQVLLRHLKD (254 aa)).

Belongs to the AccA family. As to quaternary structure, acetyl-CoA carboxylase is a heterohexamer composed of biotin carboxyl carrier protein (AccB), biotin carboxylase (AccC) and two subunits each of ACCase subunit alpha (AccA) and ACCase subunit beta (AccD).

The protein resides in the cytoplasm. The enzyme catalyses N(6)-carboxybiotinyl-L-lysyl-[protein] + acetyl-CoA = N(6)-biotinyl-L-lysyl-[protein] + malonyl-CoA. The protein operates within lipid metabolism; malonyl-CoA biosynthesis; malonyl-CoA from acetyl-CoA: step 1/1. Component of the acetyl coenzyme A carboxylase (ACC) complex. First, biotin carboxylase catalyzes the carboxylation of biotin on its carrier protein (BCCP) and then the CO(2) group is transferred by the carboxyltransferase to acetyl-CoA to form malonyl-CoA. The chain is Acetyl-coenzyme A carboxylase carboxyl transferase subunit alpha from Synechococcus elongatus (strain ATCC 33912 / PCC 7942 / FACHB-805) (Anacystis nidulans R2).